A 407-amino-acid chain; its full sequence is 12S rRNA N(4)-cytidine methyltransferase METTL15 (407 aa).

Residues 100–102 (GGH), aspartate 119, phenylalanine 146, aspartate 169, and glutamine 176 contribute to the S-adenosyl-L-methionine site. Serine 358 carries the phosphoserine modification.

The protein belongs to the methyltransferase superfamily. RsmH family.

The protein resides in the mitochondrion matrix. It carries out the reaction cytidine(839) in 12S rRNA + S-adenosyl-L-methionine = N(4)-methylcytidine(839) in 12S rRNA + S-adenosyl-L-homocysteine + H(+). Its function is as follows. N4-methylcytidine (m4C) methyltransferase responsible for the methylation of position C839 in mitochondrial 12S rRNA. Involved in the stabilization of 12S rRNA folding, therefore facilitating the assembly of the mitochondrial small ribosomal subunits. This Homo sapiens (Human) protein is 12S rRNA N(4)-cytidine methyltransferase METTL15.